The chain runs to 387 residues: 1-deoxy-D-xylulose 5-phosphate reductoisomerase (387 aa).

Positions 11, 12, 13, 14, 37, 39, and 123 each coordinate NADPH. A 1-deoxy-D-xylulose 5-phosphate-binding site is contributed by Lys-124. Residue Glu-125 participates in NADPH binding. Position 147 (Asp-147) interacts with Mn(2+). 4 residues coordinate 1-deoxy-D-xylulose 5-phosphate: Ser-148, Glu-149, Ser-173, and His-196. Position 149 (Glu-149) interacts with Mn(2+). NADPH is bound at residue Gly-202. Ser-209, Asn-214, Lys-215, and Glu-218 together coordinate 1-deoxy-D-xylulose 5-phosphate. Glu-218 serves as a coordination point for Mn(2+).

Belongs to the DXR family. Requires Mg(2+) as cofactor. It depends on Mn(2+) as a cofactor.

The catalysed reaction is 2-C-methyl-D-erythritol 4-phosphate + NADP(+) = 1-deoxy-D-xylulose 5-phosphate + NADPH + H(+). Its pathway is isoprenoid biosynthesis; isopentenyl diphosphate biosynthesis via DXP pathway; isopentenyl diphosphate from 1-deoxy-D-xylulose 5-phosphate: step 1/6. Its function is as follows. Catalyzes the NADPH-dependent rearrangement and reduction of 1-deoxy-D-xylulose-5-phosphate (DXP) to 2-C-methyl-D-erythritol 4-phosphate (MEP). This Corynebacterium diphtheriae (strain ATCC 700971 / NCTC 13129 / Biotype gravis) protein is 1-deoxy-D-xylulose 5-phosphate reductoisomerase.